Reading from the N-terminus, the 93-residue chain is Integration host factor subunit beta (93 aa).

This sequence belongs to the bacterial histone-like protein family. Heterodimer of an alpha and a beta chain.

Its function is as follows. This protein is one of the two subunits of integration host factor, a specific DNA-binding protein that functions in genetic recombination as well as in transcriptional and translational control. The chain is Integration host factor subunit beta from Rhodospirillum centenum (strain ATCC 51521 / SW).